Here is a 207-residue protein sequence, read N- to C-terminus: B2 protein (207 aa).

A disordered region spans residues 1 to 68; that stretch reads MIDQEESNFN…FKTLPPAESL (68 aa). Composition is skewed to low complexity over residues 8–26 and 35–52; these read NFNF…QFHG and KNNN…GENK. One can recognise a DCD domain in the interval 72 to 204; the sequence is ETVGGYIFVC…AISLLDIFEE (133 aa).

In Daucus carota (Wild carrot), this protein is B2 protein.